We begin with the raw amino-acid sequence, 358 residues long: DnaJ homolog subfamily B member 11 (358 aa).

An N-terminal signal peptide occupies residues 1–22 (MAPQNLGTFCLLLLYLIGTVIA). In terms of domain architecture, J spans 25–90 (DFYKILGVPR…EKRKQYDTYG (66 aa)). At Thr188 the chain carries Phosphothreonine. N-linked (GlcNAc...) asparagine glycosylation occurs at Asn261.

Part of a large chaperone multiprotein complex comprising DNAJB11, HSP90B1, HSPA5, HYOU, PDIA2, PDIA4, PDIA6, PPIB, SDF2L1, UGGT1 and very small amounts of ERP29, but not, or at very low levels, CALR nor CANX. Binds to denatured substrates in an ATP-independent manner. Interacts via the J domain with HSPA5 in an ATP-dependent manner. In terms of processing, contains high-mannose Endo H-sensitive carbohydrates. Post-translationally, cys-169, Cys-171, Cys-193 and Cys-196 form intramolecular disulfide bonds. The preferential partner for each Cys is not known.

The protein resides in the endoplasmic reticulum lumen. As a co-chaperone for HSPA5 it is required for proper folding, trafficking or degradation of proteins. Binds directly to both unfolded proteins that are substrates for ERAD and nascent unfolded peptide chains, but dissociates from the HSPA5-unfolded protein complex before folding is completed. May help recruiting HSPA5 and other chaperones to the substrate. Stimulates HSPA5 ATPase activity. It is necessary for maturation and correct trafficking of PKD1. The chain is DnaJ homolog subfamily B member 11 (DNAJB11) from Bos taurus (Bovine).